A 407-amino-acid polypeptide reads, in one-letter code: Pyridinium-3,5-bisthiocarboxylic acid mononucleotide nickel insertion protein (407 aa).

It belongs to the LarC family.

It catalyses the reaction Ni(II)-pyridinium-3,5-bisthiocarboxylate mononucleotide = pyridinium-3,5-bisthiocarboxylate mononucleotide + Ni(2+). Involved in the biosynthesis of a nickel-pincer cofactor ((SCS)Ni(II) pincer complex). Binds Ni(2+), and functions in nickel delivery to pyridinium-3,5-bisthiocarboxylic acid mononucleotide (P2TMN), to form the mature cofactor. Is thus probably required for the activation of nickel-pincer cofactor-dependent enzymes. The protein is Pyridinium-3,5-bisthiocarboxylic acid mononucleotide nickel insertion protein of Acetivibrio thermocellus (strain ATCC 27405 / DSM 1237 / JCM 9322 / NBRC 103400 / NCIMB 10682 / NRRL B-4536 / VPI 7372) (Clostridium thermocellum).